The following is a 193-amino-acid chain: ATP-dependent Clp protease proteolytic subunit (193 aa).

S98 functions as the Nucleophile in the catalytic mechanism. H123 is an active-site residue.

Belongs to the peptidase S14 family. In terms of assembly, fourteen ClpP subunits assemble into 2 heptameric rings which stack back to back to give a disk-like structure with a central cavity, resembling the structure of eukaryotic proteasomes.

It is found in the cytoplasm. The enzyme catalyses Hydrolysis of proteins to small peptides in the presence of ATP and magnesium. alpha-casein is the usual test substrate. In the absence of ATP, only oligopeptides shorter than five residues are hydrolyzed (such as succinyl-Leu-Tyr-|-NHMec, and Leu-Tyr-Leu-|-Tyr-Trp, in which cleavage of the -Tyr-|-Leu- and -Tyr-|-Trp bonds also occurs).. Functionally, cleaves peptides in various proteins in a process that requires ATP hydrolysis. Has a chymotrypsin-like activity. Plays a major role in the degradation of misfolded proteins. The protein is ATP-dependent Clp protease proteolytic subunit of Clostridium acetobutylicum (strain ATCC 824 / DSM 792 / JCM 1419 / IAM 19013 / LMG 5710 / NBRC 13948 / NRRL B-527 / VKM B-1787 / 2291 / W).